Here is a 186-residue protein sequence, read N- to C-terminus: Phosphopantetheine adenylyltransferase (186 aa).

Thr14 lines the substrate pocket. ATP contacts are provided by residues 14 to 15 (TF) and His22. Positions 46, 78, and 92 each coordinate substrate. Residues 93 to 95 (GLR), Glu103, and 128 to 134 (WLYISST) contribute to the ATP site.

This sequence belongs to the bacterial CoaD family. As to quaternary structure, homohexamer. Mg(2+) serves as cofactor.

It localises to the cytoplasm. It carries out the reaction (R)-4'-phosphopantetheine + ATP + H(+) = 3'-dephospho-CoA + diphosphate. It functions in the pathway cofactor biosynthesis; coenzyme A biosynthesis; CoA from (R)-pantothenate: step 4/5. Functionally, reversibly transfers an adenylyl group from ATP to 4'-phosphopantetheine, yielding dephospho-CoA (dPCoA) and pyrophosphate. The protein is Phosphopantetheine adenylyltransferase of Nitratidesulfovibrio vulgaris (strain ATCC 29579 / DSM 644 / CCUG 34227 / NCIMB 8303 / VKM B-1760 / Hildenborough) (Desulfovibrio vulgaris).